Consider the following 206-residue polypeptide: MARYIGPVGKVSRRLGIGITEKGLRILNKRSDPPGQHGAAARRRQLSDYGMQLREKQKAKFLYGVLERQFRRLFEQASRRSGVTGEYLLSLLERRLDNVVYRLGFATTRAQARQLVNHGHIVVDGRKTNIPSYTVKVGQVIAVRPQSRSRTYFKNLVDSGVLNKHRAPEWLRLNAAELSGTVVALPRREDAEAGINEQLIVEFYSR.

In terms of domain architecture, S4 RNA-binding spans R94 to V157.

Belongs to the universal ribosomal protein uS4 family. As to quaternary structure, part of the 30S ribosomal subunit. Contacts protein S5. The interaction surface between S4 and S5 is involved in control of translational fidelity.

Functionally, one of the primary rRNA binding proteins, it binds directly to 16S rRNA where it nucleates assembly of the body of the 30S subunit. Its function is as follows. With S5 and S12 plays an important role in translational accuracy. The protein is Small ribosomal subunit protein uS4 of Chloroflexus aurantiacus (strain ATCC 29364 / DSM 637 / Y-400-fl).